A 388-amino-acid polypeptide reads, in one-letter code: MSQPRTVTVLGATGSIGHSTLDLIERNLDRYQVIALTANRNVKDLADAAKRTNAKRAVIADPSLYNDLKEALAGSSVEAAAGADALVEAAMMGADWTMAAIIGCAGLKATLAAIRKGKTVALANKESLVSAGGLMIDAVREHGTTLLPVDSEHNAIFQCFPHHNRDYVRRIIITASGGPFRTTSLAEMATVTPERAVQHPNWSMGAKISIDSATMMNKGLELIEAYHLFQIPLEKFEILVHPQSVIHSMVEYLDGSILAQIGSPDMRTPIGHTLAWPKRMETPAESLDFTKLRQMDFEAPDYERFPALTLAMESIKSGGARPAVMNAANEIAVAAFLDKKIGFLDIAKIVEKTLDHYTPATPSSLEDVFAIDNEARIQAAALMESLPA.

7 residues coordinate NADPH: T13, G14, S15, I16, R40, N41, and N124. K125 provides a ligand contact to 1-deoxy-D-xylulose 5-phosphate. E126 is an NADPH binding site. D150 contributes to the Mn(2+) binding site. Residues S151, E152, S176, and H199 each coordinate 1-deoxy-D-xylulose 5-phosphate. A Mn(2+)-binding site is contributed by E152. NADPH is bound at residue G205. 1-deoxy-D-xylulose 5-phosphate contacts are provided by S212, N217, K218, and E221. Residue E221 coordinates Mn(2+).

It belongs to the DXR family. As to quaternary structure, homodimer. Requires Mg(2+) as cofactor. Mn(2+) serves as cofactor. The cofactor is Co(2+).

It carries out the reaction 2-C-methyl-D-erythritol 4-phosphate + NADP(+) = 1-deoxy-D-xylulose 5-phosphate + NADPH + H(+). Its pathway is isoprenoid biosynthesis; isopentenyl diphosphate biosynthesis via DXP pathway; isopentenyl diphosphate from 1-deoxy-D-xylulose 5-phosphate: step 1/6. Its activity is regulated as follows. Competitively inhibited by the antibiotic fosmidomycin. Catalyzes the NADPH-dependent rearrangement and reduction of 1-deoxy-D-xylulose-5-phosphate (DXP) to 2-C-methyl-D-erythritol 4-phosphate (MEP). Cannot use NADH instead of NADPH as the reducing agent. This chain is 1-deoxy-D-xylulose 5-phosphate reductoisomerase, found in Zymomonas mobilis subsp. mobilis (strain ATCC 31821 / ZM4 / CP4).